A 333-amino-acid chain; its full sequence is Outer membrane protein assembly factor BamC (333 aa).

An N-terminal signal peptide occupies residues 1–18; it reads MKKCLFPLSVLAVIVATG. A lipid anchor (N-palmitoyl cysteine) is attached at Cys19. Cys19 carries the S-diacylglycerol cysteine lipid modification.

The protein belongs to the BamC family. As to quaternary structure, part of the Bam complex.

It is found in the cell outer membrane. Its function is as follows. Part of the outer membrane protein assembly complex, which is involved in assembly and insertion of beta-barrel proteins into the outer membrane. The protein is Outer membrane protein assembly factor BamC of Actinobacillus succinogenes (strain ATCC 55618 / DSM 22257 / CCUG 43843 / 130Z).